The sequence spans 134 residues: Large ribosomal subunit protein uL22 (134 aa).

It belongs to the universal ribosomal protein uL22 family. In terms of assembly, part of the 50S ribosomal subunit.

Its function is as follows. This protein binds specifically to 23S rRNA; its binding is stimulated by other ribosomal proteins, e.g. L4, L17, and L20. It is important during the early stages of 50S assembly. It makes multiple contacts with different domains of the 23S rRNA in the assembled 50S subunit and ribosome. Functionally, the globular domain of the protein is located near the polypeptide exit tunnel on the outside of the subunit, while an extended beta-hairpin is found that lines the wall of the exit tunnel in the center of the 70S ribosome. The sequence is that of Large ribosomal subunit protein uL22 from Porphyromonas gingivalis (strain ATCC 33277 / DSM 20709 / CIP 103683 / JCM 12257 / NCTC 11834 / 2561).